An 823-amino-acid polypeptide reads, in one-letter code: Endoplasmin homolog (823 aa).

Positions 1–23 (MRKRTLVSVLFLFSLLFLLPDQG) are cleaved as a signal peptide. Residues 29-60 (NAEESSDDVTDPPKVEEKIGGHGGLSTDSDVV) form a disordered region. The span at 39–48 (DPPKVEEKIG) shows a compositional bias: basic and acidic residues. Residues Glu-106, Asn-110, Asp-154, Met-159, Asn-167, Lys-173, 174-175 (SG), 194-199 (QFGVGF), Phe-199, and Thr-246 contribute to the ATP site. The N-linked (GlcNAc...) asparagine glycan is linked to Asn-110. Residues 289–328 (ETEVPVEEDESADEETETTSTEEEKEEDAEEEDGEKKQKT) form a disordered region. The span at 290-321 (TEVPVEEDESADEETETTSTEEEKEEDAEEED) shows a compositional bias: acidic residues. Asn-452 and Asn-620 each carry an N-linked (GlcNAc...) asparagine glycan. Acidic residues predominate over residues 777-792 (VADEEIEAAEEPETSE). The disordered stretch occupies residues 777–823 (VADEEIEAAEEPETSEATETKSDDLAGGLNIEAEPVEQQEENTKDEL). Positions 820–823 (KDEL) match the Prevents secretion from ER motif.

Belongs to the heat shock protein 90 family. Interacts with FKBP42. Interacts with P23-1. As to expression, ubiquitous.

The protein resides in the endoplasmic reticulum lumen. May have a molecular chaperone role in the processing of secreted materials. Required for shoot apical meristem (SAM), root apical meristem (RAM) and floral meristem (FM) formation, probably by regulating the folding of CLAVATA proteins (CLVs). Also involved in pollen tube elongation. Involved in resistance to tunicamycin- or high calcium-induced ER stresses. Possesses ATPase activity. This is Endoplasmin homolog from Arabidopsis thaliana (Mouse-ear cress).